Here is a 178-residue protein sequence, read N- to C-terminus: Caveolin-1 (178 aa).

N-acetylserine is present on Ser-2. A Phosphoserine modification is found at Ser-2. Positions 2–94 (SGGKYVDSEG…WKASFTTFTV (93 aa)) are required for homooligomerization. Topologically, residues 2–104 (SGGKYVDSEG…TKYWFYRLLS (103 aa)) are cytoplasmic. An N6-acetyllysine; alternate modification is found at Lys-5. Lys-5 is covalently cross-linked (Glycyl lysine isopeptide (Lys-Gly) (interchain with G-Cter in ubiquitin); alternate). Tyr-6 is modified (phosphotyrosine). A Phosphoserine modification is found at Ser-9. Tyr-14 bears the Phosphotyrosine; by ABL1 mark. The residue at position 25 (Tyr-25) is a Phosphotyrosine. Glycyl lysine isopeptide (Lys-Gly) (interchain with G-Cter in ubiquitin) cross-links involve residues Lys-26, Lys-30, Lys-39, Lys-47, and Lys-57. Positions 82–94 (DGIWKASFTTFTV) are interaction with CAVIN3. Positions 105 to 125 (GIFGIPMALIWGVYFAILSFL) form an intramembrane region, helical. Topologically, residues 126 to 178 (HIWAVVPCIKSFLIEIQCISRVYSIYVHTFCDPLFEAIGKIFSNIRISTQKEI) are cytoplasmic. The interacts with SPRY1, SPRY2, SPRY3 and SPRY4 stretch occupies residues 131–142 (VPCIKSFLIEIQ). Residues Cys-133, Cys-143, and Cys-156 are each lipidated (S-palmitoyl cysteine). The interval 149–160 (SIYVHTFCDPLF) is interacts with SPRY1, SPRY2, and SPRY4. Residues 167–178 (FSNIRISTQKEI) are interacts with SPRY1, SPRY2, SPRY3 and SPRY4.

This sequence belongs to the caveolin family. Homooligomer. Interacts with GLIPR2. Interacts with NOSTRIN. Interacts with SNAP25 and STX1A. Interacts (via the N-terminus) with DPP4; the interaction is direct. Interacts with CTNNB1, CDH1 and JUP. Interacts with PACSIN2; this interaction induces membrane tubulation. Interacts with SLC7A9. Interacts with BMX and BTK. Interacts with TGFBR1. Interacts with CAVIN3 (via leucine-zipper domain) in a cholesterol-sensitive manner. Interacts with CAVIN1. Interacts with EHD2 in a cholesterol-dependent manner. Forms a ternary complex with UBXN6 and VCP; mediates CAV1 targeting to lysosomes for degradation. Interacts with ABCG1; this interaction regulates ABCG1-mediated cholesterol efflux. Interacts with NEU3; this interaction enhances NEU3 sialidase activity within caveola. Interacts (via C-terminus) with SPRY1, SPRY2 (via C-terminus), SPRY3, and SPRY4. Interacts with IGFBP5; this interaction allows trafficking of IGFBP5 from the plasma membrane to the nucleus. Phosphorylated at Tyr-14 by ABL1 in response to oxidative stress. Post-translationally, ubiquitinated. Undergo monoubiquitination and multi- and/or polyubiquitination. Monoubiquitination of N-terminal lysines promotes integration in a ternary complex with UBXN6 and VCP which promotes oligomeric CAV1 targeting to lysosomes for degradation. Ubiquitinated by ZNRF1; leading to degradation and modulation of the TLR4-mediated immune response.

The protein resides in the golgi apparatus membrane. It localises to the cell membrane. Its subcellular location is the membrane. The protein localises to the caveola. It is found in the membrane raft. May act as a scaffolding protein within caveolar membranes. Forms a stable heterooligomeric complex with CAV2 that targets to lipid rafts and drives caveolae formation. Mediates the recruitment of CAVIN proteins (CAVIN1/2/3/4) to the caveolae. Interacts directly with G-protein alpha subunits and can functionally regulate their activity. Involved in the costimulatory signal essential for T-cell receptor (TCR)-mediated T-cell activation. Its binding to DPP4 induces T-cell proliferation and NF-kappa-B activation in a T-cell receptor/CD3-dependent manner. Recruits CTNNB1 to caveolar membranes and may regulate CTNNB1-mediated signaling through the Wnt pathway. Negatively regulates TGFB1-mediated activation of SMAD2/3 by mediating the internalization of TGFBR1 from membrane rafts leading to its subsequent degradation. Binds 20(S)-hydroxycholesterol (20(S)-OHC). The sequence is that of Caveolin-1 (CAV1) from Echinops telfairi (Lesser hedgehog tenrec).